The primary structure comprises 341 residues: tRNA N6-adenosine threonylcarbamoyltransferase (341 aa).

Residues His-111 and His-115 each coordinate Fe cation. Substrate is bound by residues 134–138, Asp-167, Gly-180, and Asn-276; that span reads LVSGG. A Fe cation-binding site is contributed by Asp-304.

This sequence belongs to the KAE1 / TsaD family. The cofactor is Fe(2+).

It localises to the cytoplasm. It carries out the reaction L-threonylcarbamoyladenylate + adenosine(37) in tRNA = N(6)-L-threonylcarbamoyladenosine(37) in tRNA + AMP + H(+). Functionally, required for the formation of a threonylcarbamoyl group on adenosine at position 37 (t(6)A37) in tRNAs that read codons beginning with adenine. Is involved in the transfer of the threonylcarbamoyl moiety of threonylcarbamoyl-AMP (TC-AMP) to the N6 group of A37, together with TsaE and TsaB. TsaD likely plays a direct catalytic role in this reaction. This chain is tRNA N6-adenosine threonylcarbamoyltransferase, found in Pseudomonas syringae pv. syringae (strain B728a).